A 516-amino-acid polypeptide reads, in one-letter code: D-alanine--D-alanyl carrier protein ligase (516 aa).

156–157 contacts ATP; the sequence is TS. D203 contacts D-alanine. Residue 298 to 303 coordinates ATP; that stretch reads NAYGPT. Residue V307 participates in D-alanine binding. ATP is bound by residues D389, 401–404, and K503; that span reads YGGR. Residue K503 coordinates D-alanine.

The protein belongs to the ATP-dependent AMP-binding enzyme family. DltA subfamily.

Its subcellular location is the cytoplasm. It carries out the reaction holo-[D-alanyl-carrier protein] + D-alanine + ATP = D-alanyl-[D-alanyl-carrier protein] + AMP + diphosphate. It functions in the pathway cell wall biogenesis; lipoteichoic acid biosynthesis. Catalyzes the first step in the D-alanylation of lipoteichoic acid (LTA), the activation of D-alanine and its transfer onto the D-alanyl carrier protein (Dcp) DltC. In an ATP-dependent two-step reaction, forms a high energy D-alanyl-AMP intermediate, followed by transfer of the D-alanyl residue as a thiol ester to the phosphopantheinyl prosthetic group of the Dcp. D-alanylation of LTA plays an important role in modulating the properties of the cell wall in Gram-positive bacteria, influencing the net charge of the cell wall. The protein is D-alanine--D-alanyl carrier protein ligase of Streptococcus pneumoniae serotype 4 (strain ATCC BAA-334 / TIGR4).